The sequence spans 278 residues: Small ribosomal subunit protein uS9m (278 aa).

Residues 1 to 10 constitute a mitochondrion transit peptide; sequence MFSRLSLFRR. Positions 259 to 278 are disordered; it reads VERKKPGKKKARKMPTWVKR.

The protein belongs to the universal ribosomal protein uS9 family. As to quaternary structure, component of the mitochondrial small ribosomal subunit (mt-SSU). Mature yeast 74S mitochondrial ribosomes consist of a small (37S) and a large (54S) subunit. The 37S small subunit contains a 15S ribosomal RNA (15S mt-rRNA) and 34 different proteins. The 54S large subunit contains a 21S rRNA (21S mt-rRNA) and 46 different proteins.

Its subcellular location is the mitochondrion. Functionally, component of the mitochondrial ribosome (mitoribosome), a dedicated translation machinery responsible for the synthesis of mitochondrial genome-encoded proteins, including at least some of the essential transmembrane subunits of the mitochondrial respiratory chain. The mitoribosomes are attached to the mitochondrial inner membrane and translation products are cotranslationally integrated into the membrane. In Saccharomyces cerevisiae (strain ATCC 204508 / S288c) (Baker's yeast), this protein is Small ribosomal subunit protein uS9m (MRPS9).